The following is a 295-amino-acid chain: Acetylglutamate kinase (295 aa).

Substrate is bound by residues 61–62 (GG), Arg83, and Asn182.

It belongs to the acetylglutamate kinase family. ArgB subfamily.

The protein resides in the cytoplasm. It carries out the reaction N-acetyl-L-glutamate + ATP = N-acetyl-L-glutamyl 5-phosphate + ADP. It participates in amino-acid biosynthesis; L-arginine biosynthesis; N(2)-acetyl-L-ornithine from L-glutamate: step 2/4. Its function is as follows. Catalyzes the ATP-dependent phosphorylation of N-acetyl-L-glutamate. The protein is Acetylglutamate kinase of Clostridium acetobutylicum (strain ATCC 824 / DSM 792 / JCM 1419 / IAM 19013 / LMG 5710 / NBRC 13948 / NRRL B-527 / VKM B-1787 / 2291 / W).